An 842-amino-acid chain; its full sequence is ATP-binding cassette sub-family B member 6 (842 aa).

Over 1-26 (MVTVGNYCEAEGPLGPAWAQNGLSPC) the chain is Lumenal. A required for the lysosomal targeting region spans residues 1–205 (MVTVGNYCEA…SGGLFILGLW (205 aa)). A required for ATPase activity region spans residues 1-236 (MVTVGNYCEA…RNQAQSTDRT (236 aa)). An intrachain disulfide couples Cys8 to Cys26. Residues 27 to 47 (FFFTLVPSTLMALGALALVLV) form a helical membrane-spanning segment. Residues 48–72 (LPCRRRDVPSGTEELFWAADSRVAP) lie on the Cytoplasmic side of the membrane. Residues 73–93 (YALQLFLATLQVALPLAGLAG) traverse the membrane as a helical segment. Residues 94-106 (RVGTARGVRLPGY) lie on the Lumenal side of the membrane. The chain crosses the membrane as a helical span at residues 107–127 (LLLASMLGSLASACGLWLLVA). The Cytoplasmic portion of the chain corresponds to 128–147 (ERRQARQSLAMGVWMKFRHS). A helical transmembrane segment spans residues 148–168 (SGLLLLWTVAFAAENLALVSW). Residues 169 to 185 (NSPQWWWARADLGQQVQ) lie on the Lumenal side of the membrane. A helical membrane pass occupies residues 186–206 (FGLWVLRYVISGGLFILGLWA). Over 207–263 (PGLRPQSYTLRVHEADQDVERNQAQSTDRTSTWRDLGRKLRLLSSYLWPRGSPALQF) the chain is Cytoplasmic. A helical transmembrane segment spans residues 264–284 (IVLICLGLMGLDRALNVLVPI). In terms of domain architecture, ABC transmembrane type-1 spans 265 to 556 (VLICLGLMGL…FGTYYRMIQT (292 aa)). The Lumenal segment spans residues 285-305 (FYRDIVNLLTSKAPWSSLAWT). The chain crosses the membrane as a helical span at residues 306 to 326 (VTTYVFLKFLQGGGTGSTGFV). At 327–375 (SNLRTFLWIRVQQFTSRGVELRLFSHLHELSLRWHLGRRTGEVLRVVDR) the chain is on the cytoplasmic side. The chain crosses the membrane as a helical span at residues 376-396 (GTSSVTGLLSYLVFNIIPTLA). A topological domain (lumenal) is located at residue Asp397. Residues 398-418 (IIIGIIYFSMFFNAWFGLIVF) traverse the membrane as a helical segment. The Cytoplasmic portion of the chain corresponds to 419–499 (LCMSLYLFLT…SSASLVVLNQ (81 aa)). Residues 500-520 (TQNLVIGLGLLAGSLLCAYFV) traverse the membrane as a helical segment. Residues 521–529 (SEQKLQVGD) are Lumenal-facing. The helical transmembrane segment at 530–550 (FVLFGTYITQLYMPLNWFGTY) threads the bilayer. The Cytoplasmic segment spans residues 551 to 842 (YRMIQTNFID…SEDSKPQDIA (292 aa)). The ABC transporter domain occupies 590–824 (IEFENVHFSY…GGVYAEMWQL (235 aa)). 623–630 (GPSGAGKS) serves as a coordination point for ATP.

It belongs to the ABC transporter superfamily. ABCB family. Heavy Metal importer (TC 3.A.1.210) subfamily. Homodimer. Post-translationally, N-glycosylated. Highly expressed in the liver, adrenal glands, and testis.

Its subcellular location is the cell membrane. The protein resides in the mitochondrion outer membrane. The protein localises to the endoplasmic reticulum membrane. It is found in the golgi apparatus membrane. It localises to the endosome membrane. Its subcellular location is the lysosome membrane. The protein resides in the late endosome membrane. The protein localises to the early endosome membrane. It is found in the secreted. It localises to the extracellular exosome. Its subcellular location is the mitochondrion. The protein resides in the endosome. The protein localises to the multivesicular body membrane. It is found in the melanosome membrane. The catalysed reaction is heme b(in) + ATP + H2O = heme b(out) + ADP + phosphate + H(+). It carries out the reaction coproporphyrin III(in) + ATP + H2O = coproporphyrin III(out) + ADP + phosphate + H(+). It catalyses the reaction pheophorbide a(in) + ATP + H2O = pheophorbide a(out) + ADP + phosphate + H(+). The enzyme catalyses coproporphyrinogen III(in) + ATP + H2O = coproporphyrinogen III(out) + ADP + phosphate + H(+). The catalysed reaction is protoporphyrin IX(in) + ATP + H2O = protoporphyrin IX(out) + ADP + phosphate + H(+). It carries out the reaction coproporphyrin I(in) + ATP + H2O = coproporphyrin I(out) + ADP + phosphate + H(+). It catalyses the reaction uroporphyrin I(in) + ATP + H2O = uroporphyrin I(out) + ADP + phosphate + H(+). The enzyme catalyses uroporphyrin III(in) + ATP + H2O = uroporphyrin III(out) + ADP + phosphate + H(+). ATP-dependent transporter that catalyzes the transport of a broad-spectrum of porphyrins from the cytoplasm to the extracellular space through the plasma membrane or into the vesicle lumen. May also function as an ATP-dependent importer of porphyrins from the cytoplasm into the mitochondria, in turn may participate in the de novo heme biosynthesis regulation and in the coordination of heme and iron homeostasis during phenylhydrazine stress. May also play a key role in the early steps of melanogenesis producing PMEL amyloid fibrils. In vitro, it confers to cells a resistance to toxic metal such as arsenic and cadmium and against chemotherapeutics agent such as 5-fluorouracil, SN-38 and vincristin. In addition may play a role in the transition metal homeostasis. The protein is ATP-binding cassette sub-family B member 6 of Mesocricetus auratus (Golden hamster).